The chain runs to 187 residues: NADH-quinone oxidoreductase subunit C 2 (187 aa).

The segment at 153-187 is disordered; the sequence is YKDKLNPFGAEGPPPTQPDLATRDIPQGRPSTPES.

It belongs to the complex I 30 kDa subunit family. NDH-1 is composed of 14 different subunits. Subunits NuoB, C, D, E, F, and G constitute the peripheral sector of the complex.

It localises to the cell inner membrane. It catalyses the reaction a quinone + NADH + 5 H(+)(in) = a quinol + NAD(+) + 4 H(+)(out). Its function is as follows. NDH-1 shuttles electrons from NADH, via FMN and iron-sulfur (Fe-S) centers, to quinones in the respiratory chain. The immediate electron acceptor for the enzyme in this species is believed to be ubiquinone. Couples the redox reaction to proton translocation (for every two electrons transferred, four hydrogen ions are translocated across the cytoplasmic membrane), and thus conserves the redox energy in a proton gradient. The chain is NADH-quinone oxidoreductase subunit C 2 from Rhizobium etli (strain CIAT 652).